The chain runs to 386 residues: Putative 8-amino-7-oxononanoate synthase (386 aa).

Arg26 is a substrate binding site. Position 113 to 114 (113 to 114) interacts with pyridoxal 5'-phosphate; sequence GY. His138 contacts substrate. Residues Ser186, 211-214, and 240-243 each bind pyridoxal 5'-phosphate; these read DDAH and TLSK. Lys243 is subject to N6-(pyridoxal phosphate)lysine. Thr352 serves as a coordination point for substrate.

It belongs to the class-II pyridoxal-phosphate-dependent aminotransferase family. BioF subfamily. In terms of assembly, homodimer. Pyridoxal 5'-phosphate serves as cofactor.

The enzyme catalyses 6-carboxyhexanoyl-[ACP] + L-alanine + H(+) = (8S)-8-amino-7-oxononanoate + holo-[ACP] + CO2. Its pathway is cofactor biosynthesis; biotin biosynthesis. Its function is as follows. Catalyzes the decarboxylative condensation of pimeloyl-[acyl-carrier protein] and L-alanine to produce 8-amino-7-oxononanoate (AON), [acyl-carrier protein], and carbon dioxide. The polypeptide is Putative 8-amino-7-oxononanoate synthase (bioF) (Phenylobacterium zucineum (strain HLK1)).